The primary structure comprises 153 residues: Small ribosomal subunit protein bS16 (153 aa).

The span at 121–131 shows a compositional bias: basic and acidic residues; sequence AEAAAKAKAEA. Residues 121–153 are disordered; sequence AEAAAKAKAEAEAAAAAEEAPAEEAAEEAPAED. Positions 140 to 153 are enriched in acidic residues; sequence APAEEAAEEAPAED.

It belongs to the bacterial ribosomal protein bS16 family.

The sequence is that of Small ribosomal subunit protein bS16 from Bifidobacterium longum (strain DJO10A).